A 315-amino-acid polypeptide reads, in one-letter code: ATP synthase gamma chain (315 aa).

This sequence belongs to the ATPase gamma chain family. In terms of assembly, F-type ATPases have 2 components, CF(1) - the catalytic core - and CF(0) - the membrane proton channel. CF(1) has five subunits: alpha(3), beta(3), gamma(1), delta(1), epsilon(1). CF(0) has three main subunits: a, b and c.

The protein resides in the cellular thylakoid membrane. Produces ATP from ADP in the presence of a proton gradient across the membrane. The gamma chain is believed to be important in regulating ATPase activity and the flow of protons through the CF(0) complex. The chain is ATP synthase gamma chain from Cyanothece sp. (strain PCC 7425 / ATCC 29141).